The primary structure comprises 753 residues: CCR4-NOT transcription complex subunit 3 (753 aa).

Positions 240-534 (ATSPPSHSHM…PPQFSTAPEI (295 aa)) are disordered. The segment covering 257-268 (SSSTPTSTTSSS) has biased composition (low complexity). Over residues 284-293 (DDKKRGRSTD) the composition is skewed to basic and acidic residues. T292 carries the post-translational modification Phosphothreonine. A compositionally biased stretch (polar residues) spans 294–315 (SEVSQSPAKNGSKPVHSNQHPQ). Residue S299 is modified to Phosphoserine. Over residues 317–330 (PAVPPTYPSGPPPA) the composition is skewed to pro residues. The span at 350–376 (PSALGPKASPAPSHNSGTPAPYAQAVA) shows a compositional bias: low complexity. Gly residues predominate over residues 396–408 (SGGGGGGSGGGGS). The segment covering 424–433 (NGATSYSSVV) has biased composition (polar residues). Residues 441–457 (ALSSSGGNNASSQALGP) show a composition bias toward low complexity. A compositionally biased stretch (pro residues) spans 458–467 (PSGPHNPPPS). Over residues 479–491 (GAGGVAPGSGNNS) the composition is skewed to gly residues. S542 carries the post-translational modification Phosphoserine. The tract at residues 661 to 753 (EFYQRLSTET…YRYLEDRDLQ (93 aa)) is repressor domain.

Belongs to the CNOT2/3/5 family. Component of the CCR4-NOT complex; distinct complexes seem to exist that differ in the participation of probably mutually exclusive catalytic subunits. In the complex interacts directly with CNOT2. Interacts with TIP120B and NANOS2. Interacts with EBF1. Interacts in an RNA-independent manner with BICC1 (via KH domains). In terms of tissue distribution, ubiquitous. Highly expressed in brain, heart, thymus, spleen, kidney, liver, small intestine, lung and peripheral blood leukocytes.

Its subcellular location is the cytoplasm. It localises to the nucleus. The protein localises to the P-body. Its function is as follows. Component of the CCR4-NOT complex which is one of the major cellular mRNA deadenylases and is linked to various cellular processes including bulk mRNA degradation, miRNA-mediated repression, translational repression during translational initiation and general transcription regulation. Additional complex functions may be a consequence of its influence on mRNA expression. May be involved in metabolic regulation; may be involved in recruitment of the CCR4-NOT complex to deadenylation target mRNAs involved in energy metabolism. Involved in mitotic progression and regulation of the spindle assembly checkpoint by regulating the stability of MAD1L1 mRNA. Can repress transcription and may link the CCR4-NOT complex to transcriptional regulation; the repressive function may involve histone deacetylases. Involved in the maintenance of embryonic stem (ES) cell identity. The protein is CCR4-NOT transcription complex subunit 3 of Homo sapiens (Human).